The following is a 627-amino-acid chain: Membrane protein insertase YidC (627 aa).

The helical transmembrane segment at 8–28 threads the bilayer; that stretch reads LFLALILSMGIWMGVNYFFFP. The span at 33–57 shows a compositional bias: polar residues; sequence KKNTETKQTQSDKTSENTKQQITSG. Residues 33–68 form a disordered region; the sequence is KKNTETKQTQSDKTSENTKQQITSGKTKESNSADPV. Residues 58–68 are compositionally biased toward basic and acidic residues; it reads KTKESNSADPV. Helical transmembrane passes span 417 to 437, 488 to 508, 536 to 556, and 575 to 595; these read FTIP…KLVF, VGGC…YTAF, AIPY…LMVG, and MLMY…PSGV.

Belongs to the OXA1/ALB3/YidC family. Type 1 subfamily. In terms of assembly, interacts with the Sec translocase complex via SecD. Specifically interacts with transmembrane segments of nascent integral membrane proteins during membrane integration.

The protein resides in the cell inner membrane. Functionally, required for the insertion and/or proper folding and/or complex formation of integral membrane proteins into the membrane. Involved in integration of membrane proteins that insert both dependently and independently of the Sec translocase complex, as well as at least some lipoproteins. Aids folding of multispanning membrane proteins. This chain is Membrane protein insertase YidC, found in Leptospira interrogans serogroup Icterohaemorrhagiae serovar copenhageni (strain Fiocruz L1-130).